Here is a 259-residue protein sequence, read N- to C-terminus: Bisphosphoglycerate mutase (259 aa).

S2 carries the N-acetylserine modification. Substrate contacts are provided by residues 10-17, 23-24, R62, 89-92, R100, and 116-117; these read RHGEGAWN, CS, ERHY, and RR. Residue H11 is the Tele-phosphohistidine intermediate of the active site. The active-site Proton donor/acceptor is E89. A Phosphothreonine modification is found at T122. Residue 189-190 participates in substrate binding; sequence GN.

This sequence belongs to the phosphoglycerate mutase family. BPG-dependent PGAM subfamily. As to quaternary structure, homodimer.

It carries out the reaction (2R)-3-phospho-glyceroyl phosphate = (2R)-2,3-bisphosphoglycerate + H(+). The enzyme catalyses (2R)-2-phosphoglycerate = (2R)-3-phosphoglycerate. Its activity is regulated as follows. At alkaline pH BPGM favors the synthase reaction; however, at lower pH the phosphatase reaction is dominant. Inhibited by citrate. Functionally, plays a major role in regulating hemoglobin oxygen affinity by controlling the levels of its allosteric effector 2,3-bisphosphoglycerate (2,3-BPG). Also exhibits mutase (EC 5.4.2.11) activity. This Bos taurus (Bovine) protein is Bisphosphoglycerate mutase (BPGM).